A 23-amino-acid chain; its full sequence is Melittin-related peptide AK-23-1 (23 aa).

Lys23 carries the lysine amide modification.

Expressed by the skin glands.

The protein resides in the secreted. The chain is Melittin-related peptide AK-23-1 from Rana arvalis (Moor frog).